Reading from the N-terminus, the 57-residue chain is UPF0391 membrane protein RHECIAT_CH0003936 (57 aa).

2 helical membrane passes run 4 to 24 (WALI…SGVS) and 33 to 53 (VLFG…LMAG).

Belongs to the UPF0391 family.

It localises to the cell membrane. The chain is UPF0391 membrane protein RHECIAT_CH0003936 from Rhizobium etli (strain CIAT 652).